The sequence spans 279 residues: Dermonecrotic toxin LrSicTox-alphaIA1i (279 aa).

H11 is an active-site residue. Positions 31 and 33 each coordinate Mg(2+). H47 serves as the catalytic Nucleophile. Disulfide bonds link C51–C57 and C53–C196. D91 provides a ligand contact to Mg(2+). A glycan (N-linked (GlcNAc...) asparagine) is linked at N256.

This sequence belongs to the arthropod phospholipase D family. Class II subfamily. Mg(2+) serves as cofactor. As to expression, expressed by the venom gland.

It is found in the secreted. The enzyme catalyses an N-(acyl)-sphingosylphosphocholine = an N-(acyl)-sphingosyl-1,3-cyclic phosphate + choline. It carries out the reaction an N-(acyl)-sphingosylphosphoethanolamine = an N-(acyl)-sphingosyl-1,3-cyclic phosphate + ethanolamine. It catalyses the reaction a 1-acyl-sn-glycero-3-phosphocholine = a 1-acyl-sn-glycero-2,3-cyclic phosphate + choline. The catalysed reaction is a 1-acyl-sn-glycero-3-phosphoethanolamine = a 1-acyl-sn-glycero-2,3-cyclic phosphate + ethanolamine. With respect to regulation, inhibited with low affinity by edelfosine. Dermonecrotic toxins cleave the phosphodiester linkage between the phosphate and headgroup of certain phospholipids (sphingolipid and lysolipid substrates), forming an alcohol (often choline) and a cyclic phosphate. This toxin acts on sphingomyelin (SM). It also acts on a broad range of lysophospholipids, like lysophosphatidylinositol (LPI), lysophosphatidylglycerol (LPG), lysophosphatidylethanolamine (LPE), lysobisphosphatidic acid (LBPA), lysophosphatidylserine (LPS) and lysophosphatidylcholines (LPC) of varying chain lengths. The substrate preference is LPI &gt; LPG &gt; LPS &gt; LPC &gt;&gt; LPE, LBPA. Furthermore, the enzyme also act on cyclic phosphatidic acid and lyso-platelet activating factor (LPAF, an alkyl-LPC). The enzyme does not act on sphingosylphosphorylcholine (SPC, also known as lyso-sphingomyelin) and PAF. The toxin may also act on ceramide phosphoethanolamine (CPE). It acts by transphosphatidylation, releasing exclusively cyclic phosphate products as second products. It does not exhibit detectable PLA1/2 activity. It induces dose-dependent hemolysis and dermonecrosis. Also induces increased vascular permeability, edema, inflammatory response, and platelet aggregation. This is Dermonecrotic toxin LrSicTox-alphaIA1i from Loxosceles reclusa (Brown recluse spider).